A 165-amino-acid polypeptide reads, in one-letter code: Lipoprotein signal peptidase (165 aa).

4 helical membrane passes run 7–27, 28–48, 61–81, and 87–107; these read FFLL…KYWI, THTM…LYHV, FSHW…FWLW, and DKAL…GNLI. Residues aspartate 117 and aspartate 136 contribute to the active site. The helical transmembrane segment at 128-148 threads the bilayer; the sequence is SFAIFNLADTFITLGAISILI.

This sequence belongs to the peptidase A8 family.

The protein resides in the cell inner membrane. It catalyses the reaction Release of signal peptides from bacterial membrane prolipoproteins. Hydrolyzes -Xaa-Yaa-Zaa-|-(S,diacylglyceryl)Cys-, in which Xaa is hydrophobic (preferably Leu), and Yaa (Ala or Ser) and Zaa (Gly or Ala) have small, neutral side chains.. The protein operates within protein modification; lipoprotein biosynthesis (signal peptide cleavage). Functionally, this protein specifically catalyzes the removal of signal peptides from prolipoproteins. The polypeptide is Lipoprotein signal peptidase (Bartonella bacilliformis (strain ATCC 35685 / KC583 / Herrer 020/F12,63)).